A 450-amino-acid polypeptide reads, in one-letter code: tRNA modification GTPase MnmE (450 aa).

Residues Arg-25, Glu-86, and Arg-126 each contribute to the (6S)-5-formyl-5,6,7,8-tetrahydrofolate site. Positions 221–373 (GLRVALVGRP…LVQALLERCG (153 aa)) constitute a TrmE-type G domain. Asn-231 contacts K(+). GTP is bound by residues 231-236 (NVGKSS), 250-256 (TDLPGTT), 275-278 (DTAG), and 336-339 (NKAD). Position 235 (Ser-235) interacts with Mg(2+). K(+)-binding residues include Thr-250, Leu-252, and Thr-255. Thr-256 is a Mg(2+) binding site. Lys-450 contributes to the (6S)-5-formyl-5,6,7,8-tetrahydrofolate binding site.

The protein belongs to the TRAFAC class TrmE-Era-EngA-EngB-Septin-like GTPase superfamily. TrmE GTPase family. As to quaternary structure, homodimer. Heterotetramer of two MnmE and two MnmG subunits. K(+) is required as a cofactor.

Its subcellular location is the cytoplasm. In terms of biological role, exhibits a very high intrinsic GTPase hydrolysis rate. Involved in the addition of a carboxymethylaminomethyl (cmnm) group at the wobble position (U34) of certain tRNAs, forming tRNA-cmnm(5)s(2)U34. The chain is tRNA modification GTPase MnmE from Synechococcus sp. (strain CC9605).